The sequence spans 306 residues: Ribonuclease Z (306 aa).

Residues histidine 63, histidine 65, aspartate 67, histidine 68, histidine 141, aspartate 211, and histidine 269 each coordinate Zn(2+). The active-site Proton acceptor is the aspartate 67.

The protein belongs to the RNase Z family. In terms of assembly, homodimer. It depends on Zn(2+) as a cofactor.

It catalyses the reaction Endonucleolytic cleavage of RNA, removing extra 3' nucleotides from tRNA precursor, generating 3' termini of tRNAs. A 3'-hydroxy group is left at the tRNA terminus and a 5'-phosphoryl group is left at the trailer molecule.. In terms of biological role, zinc phosphodiesterase, which displays some tRNA 3'-processing endonuclease activity. Probably involved in tRNA maturation, by removing a 3'-trailer from precursor tRNA. The protein is Ribonuclease Z of Staphylococcus aureus (strain Mu3 / ATCC 700698).